An 875-amino-acid chain; its full sequence is Alanine--tRNA ligase (875 aa).

Residues His-596, His-600, Cys-700, and His-704 each coordinate Zn(2+).

It belongs to the class-II aminoacyl-tRNA synthetase family. Zn(2+) serves as cofactor.

The protein resides in the cytoplasm. The catalysed reaction is tRNA(Ala) + L-alanine + ATP = L-alanyl-tRNA(Ala) + AMP + diphosphate. In terms of biological role, catalyzes the attachment of alanine to tRNA(Ala) in a two-step reaction: alanine is first activated by ATP to form Ala-AMP and then transferred to the acceptor end of tRNA(Ala). Also edits incorrectly charged Ser-tRNA(Ala) and Gly-tRNA(Ala) via its editing domain. This is Alanine--tRNA ligase from Methanocella arvoryzae (strain DSM 22066 / NBRC 105507 / MRE50).